The primary structure comprises 99 residues: Protein Frey (99 aa).

A helical membrane pass occupies residues 10–29 (YPRAGLSLFLFYLILAGALL). The segment at 60–90 (DYGLRPKHPRPGGPRPLLSQAQQRKRDGPNM) is disordered.

As to quaternary structure, interacts with SPPL2C (via active sites); the interaction stabilizes FREY1 protein and inhibits SPPL2C proteolytic activity. Interacts with IZUMO1; the interaction retains IZUMO1 at the endoplasmic reticulum membrane and coordinates IZUMO1 complex assembly. As to expression, expressed in round spermatids (at protein level).

The protein resides in the endoplasmic reticulum membrane. Key regulator for male fertility expressed transiently in round spermatids where it recruits IZUMO1 at the endoplasmic reticulum (ER) membrane and coordinates the oolemmal binding multimeric complex (IZUMO1 complex) assembly. Upon complete assembly of the IZUMO1 complex, its ER retention is released, facilitating IZUMO1 complex export to the acrosome. Through the interaction with SPPL2C, inhibits its intramembrane protease activity directly accessing the catalytic center of an I-CLiP. The chain is Protein Frey from Mus musculus (Mouse).